A 351-amino-acid chain; its full sequence is Glycerol-3-phosphate dehydrogenase [NAD(P)+] (351 aa).

NADPH contacts are provided by Ser-12, Trp-13, His-33, and Lys-114. 3 residues coordinate sn-glycerol 3-phosphate: Lys-114, Gly-145, and Ser-147. Ala-149 is a binding site for NADPH. Lys-200, Asp-253, Ser-263, Arg-264, and Asn-265 together coordinate sn-glycerol 3-phosphate. Lys-200 (proton acceptor) is an active-site residue. Arg-264 lines the NADPH pocket. NADPH contacts are provided by Val-288 and Glu-290.

The protein belongs to the NAD-dependent glycerol-3-phosphate dehydrogenase family.

It localises to the cytoplasm. The catalysed reaction is sn-glycerol 3-phosphate + NAD(+) = dihydroxyacetone phosphate + NADH + H(+). It carries out the reaction sn-glycerol 3-phosphate + NADP(+) = dihydroxyacetone phosphate + NADPH + H(+). It participates in membrane lipid metabolism; glycerophospholipid metabolism. Its function is as follows. Catalyzes the reduction of the glycolytic intermediate dihydroxyacetone phosphate (DHAP) to sn-glycerol 3-phosphate (G3P), the key precursor for phospholipid synthesis. The chain is Glycerol-3-phosphate dehydrogenase [NAD(P)+] from Lacticaseibacillus casei (strain BL23) (Lactobacillus casei).